A 505-amino-acid polypeptide reads, in one-letter code: MEEFQGYLDXNRSRQHYLLYPLLFREYIYALAHDHGLNRSILFENAGYDNKXSSIIVKRLITRMYQQNSLIFSAKDSIQNQFFGHNKNLYSQILSEGFAVIVEIPFSLRFLFSLERKEIAKSHNLRSIHSIFPFLZDXFTHLDYVSDVLIPYHIHLEILVQTLRYWVKDASSLHLLRFFLHDYWNSFITPKKHITFFLKGNPRLFLFLYNSHICEYEYIFLFLRNQSSHLRSTSSGIFFERIHFYVKIEHFHFVKVFFDNNFQCILWFLKDPFMHYVRYQGKFFMASKDTPLLMNKWKCYLVNLWQYHFSVWFQPGRIDINQLCKYSLDFLGYRSSVRLNSSVVRSQMLENLFLINNAMKKFETIVPIIPLIGSLYKSNFCNTFGHPISKPSRTDSSDSDIIDRFLRICRNLSHYHSGSSKKKSLYRVKYILRLSCVKTLARKHKRTVRTFVKRLGSEFFEEFLTEEEVVFSLIFPRTYSTSRRLYRGQIWYLDITSINDLVNYE.

Belongs to the intron maturase 2 family. MatK subfamily.

It is found in the plastid. The protein localises to the chloroplast. Functionally, usually encoded in the trnK tRNA gene intron. Probably assists in splicing its own and other chloroplast group II introns. The polypeptide is Maturase K (Kunzea ericoides (White teatree)).